The following is a 1400-amino-acid chain: Macrophage-stimulating protein receptor (1400 aa).

The N-terminal stretch at 1-24 (MELLPPLPQSFLLLLLLPAKPAAG) is a signal peptide. Residues 25 to 957 (EDWQCPRTPY…PGPDGVPQST (933 aa)) are Extracellular-facing. A Sema domain is found at 31–522 (RTPYAASRDF…SGDQVFQVPI (492 aa)). A glycan (N-linked (GlcNAc...) asparagine) is linked at asparagine 66. 7 disulfides stabilise this stretch: cysteine 101/cysteine 104, cysteine 107/cysteine 162, cysteine 135/cysteine 143, cysteine 174/cysteine 177, cysteine 300/cysteine 367, cysteine 385/cysteine 407, and cysteine 386/cysteine 422. Residues asparagine 419, asparagine 458, and asparagine 488 are each glycosylated (N-linked (GlcNAc...) asparagine). 4 disulfides stabilise this stretch: cysteine 527–cysteine 545, cysteine 533–cysteine 567, cysteine 536–cysteine 552, and cysteine 548–cysteine 558. 3 IPT/TIG domains span residues 569 to 671 (PKLT…FRVD), 684 to 767 (PVLI…FQYR), and 770 to 860 (PVVL…FRFL). N-linked (GlcNAc...) asparagine glycosylation is found at asparagine 654, asparagine 720, asparagine 841, and asparagine 897. Residues 958-978 (LLGILLPLLLLVAALATALVF) traverse the membrane as a helical segment. The Cytoplasmic segment spans residues 979–1400 (SYWWRRKQLV…RPLSEPPRPT (422 aa)). The Protein kinase domain occupies 1082–1345 (THSDRVIGKG…VLVGEVEQIV (264 aa)). Residues 1088-1096 (IGKGHFGVV), lysine 1114, and 1161-1164 (LPYM) contribute to the ATP site. Aspartate 1208 serves as the catalytic Proton acceptor. Arginine 1212 lines the ATP pocket. Phosphotyrosine; by autocatalysis occurs at positions 1238, 1239, 1353, and 1360. Residues 1367–1400 (TSHEMNVRPEQPQFSPMPGNVRRPRPLSEPPRPT) are disordered.

The protein belongs to the protein kinase superfamily. Tyr protein kinase family. As to quaternary structure, heterodimer of an alpha chain and a beta chain which are disulfide linked. Binds PLXNB1. Associates with and is negatively regulated by HYAL2. Interacts when phosphorylated with downstream effectors including PIK3R1, PCLG1, GRB2 and GAB1. Interacts with integrin beta1/ITGB1 in a ligand-independent fashion. Post-translationally, proteolytic processing yields the two subunits. Autophosphorylated in response to ligand binding on Tyr-1238 and Tyr-1239 in the kinase domain leading to further phosphorylation of Tyr-1353 and Tyr-1360 in the C-terminal multifunctional docking site. In terms of processing, ubiquitinated. Ubiquitination by CBL regulates the receptor stability and activity through proteasomal degradation. Post-translationally, O-mannosylation of IPT/TIG domains on Thr or Ser residues by TMEM260 is required for protein maturation. O-mannosylated residues are composed of single mannose glycans that are not elongated or modified. Expressed in colon, skin, lung and bone marrow.

It localises to the membrane. It catalyses the reaction L-tyrosyl-[protein] + ATP = O-phospho-L-tyrosyl-[protein] + ADP + H(+). Its activity is regulated as follows. In its inactive state, the C-terminal tail interacts with the catalytic domain and inhibits the kinase activity. Upon ligand binding, the C-terminal tail is displaced and becomes phosphorylated, thus increasing the kinase activity. Functionally, receptor tyrosine kinase that transduces signals from the extracellular matrix into the cytoplasm by binding to MST1 ligand. Regulates many physiological processes including cell survival, migration and differentiation. Ligand binding at the cell surface induces autophosphorylation of RON on its intracellular domain that provides docking sites for downstream signaling molecules. Following activation by ligand, interacts with the PI3-kinase subunit PIK3R1, PLCG1 or the adapter GAB1. Recruitment of these downstream effectors by RON leads to the activation of several signaling cascades including the RAS-ERK, PI3 kinase-AKT, or PLCgamma-PKC. RON signaling activates the wound healing response by promoting epithelial cell migration, proliferation as well as survival at the wound site. Also plays a role in the innate immune response by regulating the migration and phagocytic activity of macrophages. Alternatively, RON can also promote signals such as cell migration and proliferation in response to growth factors other than MST1 ligand. The polypeptide is Macrophage-stimulating protein receptor (MST1R) (Homo sapiens (Human)).